The chain runs to 306 residues: Eukaryotic translation initiation factor 2 subunit alpha (306 aa).

Residues 17-88 (DELVVVNVRQ…EKGYIDLSKR (72 aa)) enclose the S1 motif domain. Phosphoserine is present on serine 52. Phosphothreonine is present on threonine 179. Phosphoserine is present on residues serine 273, serine 295, serine 303, and serine 305.

This sequence belongs to the eIF-2-alpha family. As to quaternary structure, eukaryotic translation initiation factor 2 eIF2 is a heterotrimeric complex composed of an alpha, a beta and a gamma subunit.

The protein localises to the cytoplasm. It is found in the cytosol. Functionally, eIF-2 functions in the early steps of protein synthesis by forming a ternary complex with GTP and initiator tRNA. This complex binds to a 40S ribosomal subunit, followed by mRNA binding to form a 43S pre-initiation complex. Junction of the 60S ribosomal subunit to form the 80S initiation complex is preceded by hydrolysis of the GTP bound to eIF-2 and release of an eIF-2-GDP binary complex. In order for eIF-2 to recycle and catalyze another round of initiation, the GDP bound to eIF-2 must exchange with GTP by way of a reaction catalyzed by eIF2B. This is Eukaryotic translation initiation factor 2 subunit alpha (tif211) from Schizosaccharomyces pombe (strain 972 / ATCC 24843) (Fission yeast).